A 405-amino-acid chain; its full sequence is Pentatricopeptide repeat-containing protein At1g11630, mitochondrial (405 aa).

A mitochondrion-targeting transit peptide spans 1 to 72 (MAFLFRIRTS…RSTSLSPDYH (72 aa)). 9 PPR repeats span residues 74–108 (DRII…QPDP), 110–144 (SESF…EIPR), 145–180 (TVKS…GIEP), 181–215 (DLET…WIKP), 216–250 (TAAS…GVHV), 251–285 (GVAT…RMRP), 286–320 (NSVT…GYKP), 321–355 (DSEC…NWVP), and 356–386 (SFSV…VKEK).

The protein belongs to the PPR family. P subfamily.

It is found in the mitochondrion. The polypeptide is Pentatricopeptide repeat-containing protein At1g11630, mitochondrial (Arabidopsis thaliana (Mouse-ear cress)).